A 60-amino-acid polypeptide reads, in one-letter code: Cytotoxin SP15d (60 aa).

4 disulfide bridges follow: Cys-3-Cys-21, Cys-14-Cys-38, Cys-42-Cys-53, and Cys-54-Cys-59.

This sequence belongs to the three-finger toxin family. Short-chain subfamily. Type IA cytotoxin sub-subfamily. In terms of assembly, monomer in solution; Homodimer and oligomer in the presence of negatively charged lipids forming a pore with a size ranging between 20 and 30 Angstroms. As to expression, expressed by the venom gland.

The protein localises to the secreted. The protein resides in the target cell membrane. In terms of biological role, shows cytolytic activity on many different cells by forming pore in lipid membranes. In vivo, increases heart rate or kills the animal by cardiac arrest. In addition, it binds to heparin with high affinity, interacts with Kv channel-interacting protein 1 (KCNIP1) in a calcium-independent manner, and binds to integrin alpha-V/beta-3 (ITGAV/ITGB3) with moderate affinity. The protein is Cytotoxin SP15d of Naja atra (Chinese cobra).